A 98-amino-acid polypeptide reads, in one-letter code: NADH-ubiquinone oxidoreductase chain 4L (98 aa).

A run of 3 helical transmembrane segments spans residues 1–21 (MTHI…GLTF), 26–46 (LLSA…ALAM), and 59–79 (APLL…SLLV).

The protein belongs to the complex I subunit 4L family.

It is found in the mitochondrion membrane. It catalyses the reaction a ubiquinone + NADH + 5 H(+)(in) = a ubiquinol + NAD(+) + 4 H(+)(out). Core subunit of the mitochondrial membrane respiratory chain NADH dehydrogenase (Complex I) which catalyzes electron transfer from NADH through the respiratory chain, using ubiquinone as an electron acceptor. Part of the enzyme membrane arm which is embedded in the lipid bilayer and involved in proton translocation. This is NADH-ubiquinone oxidoreductase chain 4L (MT-ND4L) from Polypterus ornatipinnis (Ornate bichir).